The following is a 91-amino-acid chain: Probable Fe(2+)-trafficking protein (91 aa).

Belongs to the Fe(2+)-trafficking protein family.

In terms of biological role, could be a mediator in iron transactions between iron acquisition and iron-requiring processes, such as synthesis and/or repair of Fe-S clusters in biosynthetic enzymes. In Burkholderia thailandensis (strain ATCC 700388 / DSM 13276 / CCUG 48851 / CIP 106301 / E264), this protein is Probable Fe(2+)-trafficking protein.